We begin with the raw amino-acid sequence, 229 residues long: Large ribosomal subunit protein uL1 (229 aa).

The protein belongs to the universal ribosomal protein uL1 family. Part of the 50S ribosomal subunit.

Its function is as follows. Binds directly to 23S rRNA. The L1 stalk is quite mobile in the ribosome, and is involved in E site tRNA release. Functionally, protein L1 is also a translational repressor protein, it controls the translation of the L11 operon by binding to its mRNA. The protein is Large ribosomal subunit protein uL1 of Streptococcus pyogenes serotype M3 (strain SSI-1).